We begin with the raw amino-acid sequence, 594 residues long: Spermidine/putrescine import ATP-binding protein PotA (594 aa).

One can recognise an ABC transporter domain in the interval 24 to 435; that stretch reads IEIKKINKTY…PANNWVANFI (412 aa). 57–64 provides a ligand contact to ATP; it reads GPSGCGKT. Residues 125–304 are insert; it reads RKPIENVSAD…EWFDKKKLTR (180 aa).

Belongs to the ABC transporter superfamily. Spermidine/putrescine importer (TC 3.A.1.11.1) family. In terms of assembly, the complex is composed of two ATP-binding proteins (PotA), two transmembrane proteins (PotB and PotC) and a solute-binding protein (PotD).

It is found in the cell membrane. It carries out the reaction ATP + H2O + polyamine-[polyamine-binding protein]Side 1 = ADP + phosphate + polyamineSide 2 + [polyamine-binding protein]Side 1.. Part of the ABC transporter complex PotABCD involved in spermidine/putrescine import. Responsible for energy coupling to the transport system. The sequence is that of Spermidine/putrescine import ATP-binding protein PotA from Malacoplasma penetrans (strain HF-2) (Mycoplasma penetrans).